We begin with the raw amino-acid sequence, 262 residues long: Acyl-[acyl-carrier-protein]--UDP-N-acetylglucosamine O-acyltransferase (262 aa).

This sequence belongs to the transferase hexapeptide repeat family. LpxA subfamily. Homotrimer.

The protein resides in the cytoplasm. The catalysed reaction is a (3R)-hydroxyacyl-[ACP] + UDP-N-acetyl-alpha-D-glucosamine = a UDP-3-O-[(3R)-3-hydroxyacyl]-N-acetyl-alpha-D-glucosamine + holo-[ACP]. Its pathway is glycolipid biosynthesis; lipid IV(A) biosynthesis; lipid IV(A) from (3R)-3-hydroxytetradecanoyl-[acyl-carrier-protein] and UDP-N-acetyl-alpha-D-glucosamine: step 1/6. Its function is as follows. Involved in the biosynthesis of lipid A, a phosphorylated glycolipid that anchors the lipopolysaccharide to the outer membrane of the cell. The chain is Acyl-[acyl-carrier-protein]--UDP-N-acetylglucosamine O-acyltransferase from Shigella dysenteriae serotype 1 (strain Sd197).